The primary structure comprises 180 residues: Der GTPase-activating protein YihI (180 aa).

Disordered stretches follow at residues 1–87 (MSRK…MTKQ) and 142–180 (GLLEPEEEEDFTASSAKGSRNDDDLLADFDDINFDDYKG). Over residues 23–32 (NRTESDVEGR) the composition is skewed to basic and acidic residues. Positions 33 to 43 (LRKRAKKRKGL) are enriched in basic residues. Over residues 51 to 68 (EVNEQKKQSSEQNRDPRL) the composition is skewed to basic and acidic residues. Over residues 165–180 (DLLADFDDINFDDYKG) the composition is skewed to acidic residues.

This sequence belongs to the YihI family. As to quaternary structure, interacts with Der.

Functionally, a GTPase-activating protein (GAP) that modifies Der/EngA GTPase function. May play a role in ribosome biogenesis. This chain is Der GTPase-activating protein YihI, found in Vibrio parahaemolyticus serotype O3:K6 (strain RIMD 2210633).